A 432-amino-acid chain; its full sequence is Adenylosuccinate synthetase (432 aa).

GTP contacts are provided by residues 12-18 (GDEGKGK) and 40-42 (GHT). The active-site Proton acceptor is aspartate 13. Mg(2+) contacts are provided by aspartate 13 and glycine 40. IMP-binding positions include 13 to 16 (DEGK), 38 to 41 (NAGH), threonine 132, arginine 146, glutamine 226, threonine 241, and arginine 305. The Proton donor role is filled by histidine 41. A substrate-binding site is contributed by 301 to 307 (TVTGRKR). Residues arginine 307, 333–335 (KLD), and 415–417 (STS) contribute to the GTP site.

Belongs to the adenylosuccinate synthetase family. In terms of assembly, homodimer. Mg(2+) is required as a cofactor.

The protein localises to the cytoplasm. It catalyses the reaction IMP + L-aspartate + GTP = N(6)-(1,2-dicarboxyethyl)-AMP + GDP + phosphate + 2 H(+). The protein operates within purine metabolism; AMP biosynthesis via de novo pathway; AMP from IMP: step 1/2. Plays an important role in the de novo pathway of purine nucleotide biosynthesis. Catalyzes the first committed step in the biosynthesis of AMP from IMP. This chain is Adenylosuccinate synthetase, found in Sinorhizobium fredii (strain NBRC 101917 / NGR234).